The primary structure comprises 315 residues: Ribosomal RNA small subunit methyltransferase H (315 aa).

S-adenosyl-L-methionine is bound by residues 61 to 63 (GGH), Asp-80, Phe-108, Asp-124, and Gln-131. Positions 291–315 (PQPEEEEKNPRSRSAKLRFAQRKPL) are disordered. Basic residues predominate over residues 301–315 (RSRSAKLRFAQRKPL).

This sequence belongs to the methyltransferase superfamily. RsmH family.

It is found in the cytoplasm. The enzyme catalyses cytidine(1402) in 16S rRNA + S-adenosyl-L-methionine = N(4)-methylcytidine(1402) in 16S rRNA + S-adenosyl-L-homocysteine + H(+). In terms of biological role, specifically methylates the N4 position of cytidine in position 1402 (C1402) of 16S rRNA. The polypeptide is Ribosomal RNA small subunit methyltransferase H (Crocosphaera subtropica (strain ATCC 51142 / BH68) (Cyanothece sp. (strain ATCC 51142))).